We begin with the raw amino-acid sequence, 185 residues long: Elongation factor P (185 aa).

This sequence belongs to the elongation factor P family.

It is found in the cytoplasm. It participates in protein biosynthesis; polypeptide chain elongation. Its function is as follows. Involved in peptide bond synthesis. Stimulates efficient translation and peptide-bond synthesis on native or reconstituted 70S ribosomes in vitro. Probably functions indirectly by altering the affinity of the ribosome for aminoacyl-tRNA, thus increasing their reactivity as acceptors for peptidyl transferase. In Caldicellulosiruptor saccharolyticus (strain ATCC 43494 / DSM 8903 / Tp8T 6331), this protein is Elongation factor P.